We begin with the raw amino-acid sequence, 213 residues long: Orotate phosphoribosyltransferase (213 aa).

A 5-phospho-alpha-D-ribose 1-diphosphate-binding site is contributed by K26. 34–35 (FF) serves as a coordination point for orotate. Residues 72 to 73 (YK), R99, K100, K103, H105, and 124 to 132 (DDVITAGTA) each bind 5-phospho-alpha-D-ribose 1-diphosphate. The orotate site is built by T128 and R156.

This sequence belongs to the purine/pyrimidine phosphoribosyltransferase family. PyrE subfamily. In terms of assembly, homodimer. Mg(2+) is required as a cofactor.

The enzyme catalyses orotidine 5'-phosphate + diphosphate = orotate + 5-phospho-alpha-D-ribose 1-diphosphate. The protein operates within pyrimidine metabolism; UMP biosynthesis via de novo pathway; UMP from orotate: step 1/2. In terms of biological role, catalyzes the transfer of a ribosyl phosphate group from 5-phosphoribose 1-diphosphate to orotate, leading to the formation of orotidine monophosphate (OMP). This is Orotate phosphoribosyltransferase from Haemophilus ducreyi (strain 35000HP / ATCC 700724).